The sequence spans 420 residues: uncharacterized protein (420 aa).

One can recognise a TRAM domain in the interval 7 to 65; that stretch reads NIERGSVINVEILNAAHGGQGIAKYDGRVIFVKGAFPGDRLSANITHVKKKFARATIAS. S-adenosyl-L-methionine contacts are provided by glutamine 245, tyrosine 280, glutamate 304, and aspartate 349. The active-site Nucleophile is cysteine 376.

This sequence belongs to the class I-like SAM-binding methyltransferase superfamily. RNA M5U methyltransferase family.

This is an uncharacterized protein from Corynebacterium diphtheriae (strain ATCC 700971 / NCTC 13129 / Biotype gravis).